Reading from the N-terminus, the 226-residue chain is UPF0758 protein SPs0978 (226 aa).

Positions 103–225 constitute an MPN domain; the sequence is SVLTSVQVAE…YYSFREKSTL (123 aa). 3 residues coordinate Zn(2+): H174, H176, and D187. The JAMM motif motif lies at 174 to 187; that stretch reads HNHPSGNIEPSSND.

This sequence belongs to the UPF0758 family.

The protein is UPF0758 protein SPs0978 of Streptococcus pyogenes serotype M3 (strain SSI-1).